The primary structure comprises 377 residues: Guanine nucleotide-binding protein subunit alpha-13 (377 aa).

S-palmitoyl cysteine attachment occurs at residues Cys14 and Cys18. The 331-residue stretch at 47-377 folds into the G-alpha domain; sequence RLVKILLLGA…HDNLKQLMLQ (331 aa). The G1 motif stretch occupies residues 50–63; the sequence is KILLLGAGESGKST. Residues 58–63, Ser173, and 197–200 contribute to the GTP site; these read ESGKST and LLAR. A Mg(2+)-binding site is contributed by Ser62. Residues 195-203 are G2 motif; the sequence is DILLARRPT. Thr203 lines the Mg(2+) pocket. Position 203 is a phosphothreonine; by PKA (Thr203). The segment at 218–227 is G3 motif; that stretch reads FKMVDVGGQR. The tract at residues 287–294 is G4 motif; it reads ILFLNKTD. GTP contacts are provided by residues 291 to 294 and Ala349; that span reads NKTD. Positions 347–352 are G5 motif; the sequence is TTAINT.

It belongs to the G-alpha family. G(12) subfamily. G proteins are composed of 3 units; alpha, beta and gamma. The alpha chain contains the guanine nucleotide binding site. Interacts with UBXD5. Interacts with HAX1. Interacts (in GTP-bound form) with PPP5C (via TPR repeats); activates PPP5C phosphatase activity and translocates PPP5C to the cell membrane. Interacts with RGS22. Interacts (in GTP-bound form) with ARHGEF1. Interacts (in GTP-bound form) with ARHGEF11 (via RGS domain). Interacts (in GTP-bound form) with ARHGEF12 (via RGS domain). Interacts with CTNND1. Interacts with GASL2L2. Interacts with GPR35. Interacts with GPR174. Palmitoylation is critical for proper membrane localization and signaling. Post-translationally, phosphorylation on Thr-203 by PKA destabilizes the heterotrimer of alpha, beta and gamma, and inhibits Rho activation. As to expression, expressed in testis, including in Leydig cells and in the seminiferous epithelium, in differentiating cells from the spermatogonia to mature spermatozoa stages and round spermatids (at protein level). Expressed in 99.2% of spermatozoa from healthy individuals, but only in 28.6% of macrocephalic spermatozoa from infertile patients (at protein level).

It localises to the cell membrane. It is found in the melanosome. Its subcellular location is the cytoplasm. The protein resides in the nucleus. In terms of biological role, guanine nucleotide-binding proteins (G proteins) are involved as modulators or transducers in various transmembrane signaling systems. Activates effector molecule RhoA by binding and activating RhoGEFs (ARHGEF1/p115RhoGEF, ARHGEF11/PDZ-RhoGEF and ARHGEF12/LARG). GNA13-dependent Rho signaling subsequently regulates transcription factor AP-1 (activating protein-1). Promotes tumor cell invasion and metastasis by activating RhoA/ROCK signaling pathway. Inhibits CDH1-mediated cell adhesion in a process independent from Rho activation. In lymphoid follicles, transmits P2RY8- and S1PR2-dependent signals that lead to inhibition of germinal center (GC) B cell growth and migration outside the GC niche. The chain is Guanine nucleotide-binding protein subunit alpha-13 (GNA13) from Homo sapiens (Human).